The sequence spans 289 residues: MLKPEWLRVKAPQRERIGAVADLLLDLNLNTVCQEASCPNIGECFAGGTATFLIMGPGCTRACPYCDIDFDKSVRELDPTEPERLGEAVARLGLKHVVITSVNRDDLPDGGATQFVACIEQVKQRSPLTTIELLIPDFCGNWDALATVMAAAPHVLNHNIETVPRMYRLARPQGIYERSLELLQRVRDDWPRAYSKSGLMVGLGETDDEVIDVLRDLRTHRVDIVTIGQYLSPGPKHLAVDRFVTPEQFDTYRRIGEEELGFLQVVSTPLTRSSYHAGEVQRLMASHPR.

Residues cysteine 33, cysteine 38, cysteine 44, cysteine 59, cysteine 63, cysteine 66, and serine 274 each contribute to the [4Fe-4S] cluster site. The Radical SAM core domain maps to 45–263; it reads FAGGTATFLI…RIGEEELGFL (219 aa).

It belongs to the radical SAM superfamily. Lipoyl synthase family. [4Fe-4S] cluster serves as cofactor.

The protein resides in the cytoplasm. The enzyme catalyses [[Fe-S] cluster scaffold protein carrying a second [4Fe-4S](2+) cluster] + N(6)-octanoyl-L-lysyl-[protein] + 2 oxidized [2Fe-2S]-[ferredoxin] + 2 S-adenosyl-L-methionine + 4 H(+) = [[Fe-S] cluster scaffold protein] + N(6)-[(R)-dihydrolipoyl]-L-lysyl-[protein] + 4 Fe(3+) + 2 hydrogen sulfide + 2 5'-deoxyadenosine + 2 L-methionine + 2 reduced [2Fe-2S]-[ferredoxin]. It functions in the pathway protein modification; protein lipoylation via endogenous pathway; protein N(6)-(lipoyl)lysine from octanoyl-[acyl-carrier-protein]: step 2/2. Its function is as follows. Catalyzes the radical-mediated insertion of two sulfur atoms into the C-6 and C-8 positions of the octanoyl moiety bound to the lipoyl domains of lipoate-dependent enzymes, thereby converting the octanoylated domains into lipoylated derivatives. This chain is Lipoyl synthase 1, found in Parasynechococcus marenigrum (strain WH8102).